The sequence spans 540 residues: MRVNNGLPPQELEAYGISNVHDIVYNPSYDLLYQEELDPSLTGYERGVLTNLGAVAVDTGIFTGRSPKDKYIVRDDTTRDTFWWADKGKGKNDNKPLSPETWQHLKGLVTRQLSGKRLFVVDAFCGANPDTRLSVRFITEVAWQAHFVKNMFIRPSDEELAGFKPDFIVMNGAKCTNPQWKEQGLNSENFVAFNLTERMQLIGGTWYGGEMKKGMFSMMNYLLPLKGIASMHCSANVGEKGDVAVFFGLSGTGKTTLSTDPKRRLIGDDEHGWDDDGVFNFEGGCYAKTIKLSKEAEPEIYNAIRRDALLENVTVREDGTIDFDDGSKTENTRVSYPIYHIDNIVKPVSKAGHATKVIFLTADAFGVLPPVSRLTADQTQYHFLSGFTAKLAGTERGITEPTPTFSACFGAAFLSLHPTQYAEVLVKRMQAAGAQAYLVNTGWNGTGKRISIKDTRAIIDAILNGSLDNAETFTLPMFNLAIPTELPGVDTKILDPRNTYASPEQWQEKAETLAKLFIDNFDKYTDTPAGAALVAAGPKL.

Residue arginine 65 coordinates substrate. At lysine 87 the chain carries N6-acetyllysine. The substrate site is built by tyrosine 207 and lysine 213. ATP-binding positions include lysine 213, histidine 232, and 248-256 (GLSGTGKTT). Residues lysine 213 and histidine 232 each coordinate Mn(2+). Residue aspartate 269 participates in Mn(2+) binding. Residues glutamate 297, arginine 333, 449–450 (RI), and threonine 455 each bind ATP. Arginine 333 is a substrate binding site. Lysine 523 is modified (N6-acetyllysine).

This sequence belongs to the phosphoenolpyruvate carboxykinase (ATP) family. Monomer. Requires Mn(2+) as cofactor.

The protein localises to the cytoplasm. The enzyme catalyses oxaloacetate + ATP = phosphoenolpyruvate + ADP + CO2. It functions in the pathway carbohydrate biosynthesis; gluconeogenesis. Functionally, involved in the gluconeogenesis. Catalyzes the conversion of oxaloacetate (OAA) to phosphoenolpyruvate (PEP) through direct phosphoryl transfer between the nucleoside triphosphate and OAA. This is Phosphoenolpyruvate carboxykinase (ATP) from Shigella flexneri.